We begin with the raw amino-acid sequence, 420 residues long: RING finger protein 39 (420 aa).

The segment at 88–135 (CPLCGGSFEDPVLLACEHSFCRACLARRWGTPPATGTEASPTACPCCG) adopts an RING-type zinc-finger fold. The B30.2/SPRY domain maps to 210-420 (DDLPEDYPVV…APLRIVPAES (211 aa)). Residues 246–265 (DRRSVQLAPPGTPAPPDGPK) form a disordered region.

The protein localises to the cytoplasm. It catalyses the reaction S-ubiquitinyl-[E2 ubiquitin-conjugating enzyme]-L-cysteine + [acceptor protein]-L-lysine = [E2 ubiquitin-conjugating enzyme]-L-cysteine + N(6)-ubiquitinyl-[acceptor protein]-L-lysine.. It functions in the pathway protein modification; protein ubiquitination. Plays an inhibitory role in anti-RNA viral innate immunity by targeting the adapter DDX3X and promoting its 'Lys-48'-linked polyubiquitination. Alternatively, enhances the cGAS-STING pathway activation by promoting 'Lys-63'-linked ubiquitination of STING1, facilitating the STING1-TBK1 complex formation and STING1 activation. The protein is RING finger protein 39 (RNF39) of Pan troglodytes (Chimpanzee).